A 217-amino-acid polypeptide reads, in one-letter code: Rhicadhesin receptor (217 aa).

A signal peptide spans 1–20 (MKLIAVLLLVVLATATTATA). Cysteines 30 and 45 form a disulfide. N-linked (GlcNAc...) asparagine glycosylation is found at Asn-50 and Asn-68. The 150-residue stretch at 58–207 (SNLLVKQGAT…AFQIGTKEVQ (150 aa)) folds into the Cupin type-1 domain. Residues His-107, His-109, Glu-114, and His-153 each contribute to the Mn(2+) site.

The protein belongs to the germin family. Post-translationally, glycosylated.

The protein localises to the secreted. It localises to the extracellular space. It is found in the apoplast. The protein resides in the cell wall. Putative receptor for bacterial rhicadhesin, an attachment protein of rhizobiaceae. The protein is Rhicadhesin receptor (GER1) of Pisum sativum (Garden pea).